The following is a 757-amino-acid chain: MFVRESVMVGGRALTLETGRLAKQAHGAVLVTYGDTMVLVTAVSQDERPGLDFFPLTCEFVEKTYAAGKIPGGFFKREARQREEEILSSRLMDRPLRPLFPEGFKRDTQIIATVLSSDKQNKADVLALTGASAALHISDIPWHGPVVGVRVGRLDGEFVAYPTVADIERCDIDLVVACSRDAIVMVEGGAAEATEAEIIDALMFAHETAQPVIDLIEKMRAAVGKPKREFVAPALPDEIKRRVAQIVDEDLKAATKVTDKKARYDGYSSLKKKLTETLSAELGAEKLLPLQGLVKAEFEERKAHVVRTYVTEEGRRIDGRDGRSIRPIMCEVGLLPRVHGSALFQRGETQAIVTTTLGTSTDEQKIDGLMGETWKRFYLHYNFPPFSTGETKPLRGPGRREIGHGALAERALSRMIPAPDQFPYTIRIVSETLESNGSSSMAAVCGGCLSLMDAGVPIKSPVAGIAMGLIMEGNKYAVLSDILGDEDHLGDMDFKVCGTARGVTAIQMDIKIAGLSRQILAQALDQAREGRLHILGKMLETLPTTRPELSQYAPRITTVRVKPDQIRLIIGPGGKTIKGIVDQTGVAIDVEDDGTVNVASADSDAVKRALDIIKGLTAEPEVGATYKGTVKRITDFGAFVEILPNTDGLLHISEMAHTRVERVEDVVKEGDSLDVKVLSVDREGKIRLSRRELLPLPEGEEGDRARERMAQARDAGPPPRRDGPGGRGGDRGGDRGSRPGLDRDRGGPPRERRERRS.

Mg(2+) contacts are provided by aspartate 487 and aspartate 493. The region spanning 554 to 613 is the KH domain; the sequence is PRITTVRVKPDQIRLIIGPGGKTIKGIVDQTGVAIDVEDDGTVNVASADSDAVKRALDII. The region spanning 623–691 is the S1 motif domain; that stretch reads GATYKGTVKR…REGKIRLSRR (69 aa). The segment at 697–757 is disordered; sequence PEGEEGDRAR…PPRERRERRS (61 aa). Composition is skewed to basic and acidic residues over residues 702 to 711 and 719 to 757; these read GDRARERMAQ and PRRD…ERRS.

The protein belongs to the polyribonucleotide nucleotidyltransferase family. The cofactor is Mg(2+).

It localises to the cytoplasm. It carries out the reaction RNA(n+1) + phosphate = RNA(n) + a ribonucleoside 5'-diphosphate. Functionally, involved in mRNA degradation. Catalyzes the phosphorolysis of single-stranded polyribonucleotides processively in the 3'- to 5'-direction. This is Polyribonucleotide nucleotidyltransferase from Sorangium cellulosum (strain So ce56) (Polyangium cellulosum (strain So ce56)).